The chain runs to 272 residues: HTH-type transcriptional repressor AllR (272 aa).

Positions 1–20 (MTEVRRRGRPGQAEPTAQKG) are disordered. Residues 21–83 (AQALERGIAI…SQLGWWHIGL (63 aa)) enclose the HTH iclR-type domain. Positions 43 to 62 (VSDISGSLDLPLSTTFRLLK) form a DNA-binding region, H-T-H motif. The region spanning 98-267 (VLSVAGPFMH…AKDISTALGL (170 aa)) is the IclR-ED domain. Residues 154–156 (SGA), Asp207, Cys217, and 234–236 (SIS) contribute to the glyoxylate site.

Its function is as follows. Negative regulator of allantoin and glyoxylate utilization operons. Binds to the gcl promoter and to the allS-allA intergenic region. The sequence is that of HTH-type transcriptional repressor AllR (allR) from Salmonella paratyphi A (strain ATCC 9150 / SARB42).